Consider the following 433-residue polypeptide: O-methyltransferase aclM (433 aa).

A coiled-coil region spans residues 5–37 (LTDAERTALQTSLEALNRQVEATRNILRSNSQK). Residues aspartate 277 and 311–313 (GDF) each bind S-adenosyl-L-methionine. Histidine 330 functions as the Proton acceptor in the catalytic mechanism.

Belongs to the class I-like SAM-binding methyltransferase superfamily. Cation-independent O-methyltransferase family. COMT subfamily.

It participates in mycotoxin biosynthesis. In terms of biological role, O-methyltransferase; part of the gene cluster that mediates the biosynthesis of aspirochlorine (or antibiotic A30641), an unusual halogenated spiro compound with distinctive antifungal properties due to selective inhibition of protein biosynthesis, and which is also active against bacteria, viruses, and murine tumor cells. The non-ribosomal peptide synthetase (NRPS) aclP is responsible the formation of the diketopiperazine (DKP) core from the condensation of 2 phenylalanine residues. One Phe residue is tailored into chlorotyrosine by hydroxylation and chlorination, whereas the second Phe undergoes an unprecedented C-C bond cleavage to be converted into glycine. After formation of the DKP, sulfur is incorporated into the DKP by conjugation with glutathione by aclG, followed by its stepwise degradation to the thiol by aclI, aclJ and aclK, and the dithiol oxidation by aclT. In addition, oxygenases (aclB, aclC, aclL and aclO) and O-methyltransferases (aclM and aclU) act as tailoring enzymes to produce the intermediate dechloroaspirochlorine. Ultimately, chlorination of dechloroaspirochlorine by the halogenase aclH is the last step in the aspirochlorine pathway. The polypeptide is O-methyltransferase aclM (Aspergillus oryzae (strain ATCC 42149 / RIB 40) (Yellow koji mold)).